We begin with the raw amino-acid sequence, 124 residues long: UPF0212 protein Hlac_0869 (124 aa).

It belongs to the UPF0212 family.

The polypeptide is UPF0212 protein Hlac_0869 (Halorubrum lacusprofundi (strain ATCC 49239 / DSM 5036 / JCM 8891 / ACAM 34)).